Reading from the N-terminus, the 183-residue chain is Ribulose bisphosphate carboxylase small subunit, chloroplastic (183 aa).

The transit peptide at 1-58 directs the protein to the chloroplast; sequence MASSMLSTAAVACINRASPAQASMVAPFTGLKSTSAFPTTRKTTTDITSIASNGGRVQ.

This sequence belongs to the RuBisCO small chain family. Heterohexadecamer of 8 large and 8 small subunits.

It localises to the plastid. The protein resides in the chloroplast. In terms of biological role, ruBisCO catalyzes two reactions: the carboxylation of D-ribulose 1,5-bisphosphate, the primary event in carbon dioxide fixation, as well as the oxidative fragmentation of the pentose substrate. Both reactions occur simultaneously and in competition at the same active site. Although the small subunit is not catalytic it is essential for maximal activity. The protein is Ribulose bisphosphate carboxylase small subunit, chloroplastic of Hevea brasiliensis (Para rubber tree).